Reading from the N-terminus, the 685-residue chain is Stromal interaction molecule 1 (685 aa).

Positions 1 to 22 (MDVCVRLALWLLWGLLLHQGQS) are cleaved as a signal peptide. At 23–213 (LSHSHSEKAT…LLTRHNHLKD (191 aa)) the chain is on the extracellular side. EF-hand domains lie at 64–97 (SFEAVRNIHKLMDDDANGDVDVEESDEFLREDLN) and 102–126 (TVKHSTFHGEDKLISVEDLWKAWKS). 5 residues coordinate Ca(2+): Asp-76, Asp-78, Asn-80, Asp-82, and Glu-87. N-linked (GlcNAc...) asparagine glycans are attached at residues Asn-131 and Asn-171. One can recognise an SAM domain in the interval 132 to 200 (WTVDEVVQWL…QLKALDTVLF (69 aa)). Residues 214–234 (FMLVVSIVIGVGGCWFAYIQN) traverse the membrane as a helical segment. Residues 235–685 (RYSKEHMKKM…LKIFKKPLKK (451 aa)) are Cytoplasmic-facing. Residues 248-442 (LEGLHRAEQS…IEILCGFQIV (195 aa)) adopt a coiled-coil conformation. Ser-257 bears the Phosphoserine mark. The tract at residues 344 to 442 (PEALQKWLQL…IEILCGFQIV (99 aa)) is SOAR/CAD. The tract at residues 475–483 (DDVDDMDEE) is contributes to fast Ca(2+)-dependent inactivation of CRAC channels. A compositionally biased stretch (low complexity) spans 490–499 (MQSPSLQSSV). The tract at residues 490–542 (MQSPSLQSSVRQRLTEPQHGLGSQRDLTHSDSESSLHMSDRQRVAPKPPQMSR) is disordered. Residue Thr-504 is modified to Phosphothreonine. A Phosphoserine modification is found at Ser-512. Residues 515 to 532 (DLTHSDSESSLHMSDRQR) show a composition bias toward basic and acidic residues. Thr-517 is subject to Phosphothreonine. 11 positions are modified to phosphoserine: Ser-519, Ser-521, Ser-523, Ser-524, Ser-567, Ser-575, Ser-602, Ser-608, Ser-618, Ser-621, and Ser-628. The segment at 596–685 (LMELSPSAPP…LKIFKKPLKK (90 aa)) is disordered. The span at 608 to 620 (SPHLDSSRSHSPS) shows a compositional bias: low complexity. The short motif at 642 to 645 (TRIP) is the Microtubule tip localization signal element. Acidic residues predominate over residues 655–666 (EEDNGSIGEETD). At Ser-660 the chain carries Phosphoserine. The residue at position 665 (Thr-665) is a Phosphothreonine. Phosphoserine is present on Ser-668. A compositionally biased stretch (basic residues) spans 670–685 (GRKKFPLKIFKKPLKK). Residues 672-685 (KKFPLKIFKKPLKK) form a required for generation of inwardly rectifying CRAC currents region.

Monomer in the presence of Ca(2+); it oligomerizes in absence of Ca(2+). Forms homooligomers and heterooligomers with STIM2. Interacts with pore-forming subunits of CRAC channels, ORAI1, ORAI2 and ORAI3; this interaction is potentiated upon Ca(2+) store depletion. Interacts (via the transmembrane region and the SOAR/CAD domain) with SPPL3; the interaction promotes the binding of STIM1 to ORAI1. Interacts (via the SOAR/CAD domain) with ORAI1. Interacts with MAPRE1; probably required for targeting to the growing microtubule plus ends. Interacts with CRACR2A/EFCAB4B; the interaction is direct and takes place in absence of Ca(2+). Forms a complex with CRACR2A/EFCAB4B and ORAI1 at low concentration of Ca(2+), the complex dissociates at elevated Ca(2+) concentrations. Interacts with SARAF, promoting a slow inactivation of STIM1-dependent SOCE activity, possibly by facilitating the deoligomerization of STIM1. Interacts with EFHB; the interaction takes place upon Ca(2+)-store depletion and inhibits the association with SARAF. Interacts with ASPH (isoform 8). Interacts with SLC35G1; intracellular Ca(2+)-dependent. May interact with ATP1A1, ATP2A2, ATP2B1, ATP2B4, KPNB1 and XPO1; through SLC35G1. Interacts with TMEM203. Interacts with STIMATE, promoting STIM1 conformational switch. Interacts with TMEM178A. Interacts with CASQ1 (via C-terminal end and preferentially with the monomeric form); this interaction increases in response to a depletion of intracellular Ca(2+), decreases both STIM1 aggregation and clustering, interaction of STIM1 with ORAI1 and store-operated Ca(2+) entry (SOCE) activity. Interacts with ADCY8. In terms of processing, glycosylation is required for cell surface expression. Post-translationally, phosphorylated predominantly on Ser residues. As to expression, ubiquitously expressed in various human primary cells and tumor cell lines.

The protein resides in the cell membrane. Its subcellular location is the endoplasmic reticulum membrane. The protein localises to the cytoplasm. It is found in the cytoskeleton. It localises to the sarcoplasmic reticulum. Functionally, acts as a Ca(2+) sensor that gates two major inward rectifying Ca(2+) channels at the plasma membrane: Ca(2+) release-activated Ca(2+) (CRAC) channels and arachidonate-regulated Ca(2+)-selective (ARC) channels. Plays a role in mediating store-operated Ca(2+) entry (SOCE), a Ca(2+) influx following depletion of intracellular Ca(2+) stores. Upon Ca(2+) depletion, translocates from the endoplasmic reticulum to the plasma membrane where it activates CRAC channel pore-forming subunits ORA1, ORA2 and ORAI3 to generate sustained and oscillatory Ca(2+) entry. Involved in enamel formation. This is Stromal interaction molecule 1 (STIM1) from Homo sapiens (Human).